The following is a 74-amino-acid chain: Mitotic-spindle organizing protein 1 (74 aa).

It belongs to the MOZART1 family. As to quaternary structure, part of the gamma-tubulin complex.

It localises to the cytoplasm. The protein localises to the cytoskeleton. Its subcellular location is the microtubule organizing center. The protein resides in the spindle pole body. Functionally, required for gamma-tubulin complex recruitment to the microtubule organizing center (MTOC). The sequence is that of Mitotic-spindle organizing protein 1 from Emericella nidulans (strain FGSC A4 / ATCC 38163 / CBS 112.46 / NRRL 194 / M139) (Aspergillus nidulans).